A 339-amino-acid chain; its full sequence is Methionyl-tRNA formyltransferase (339 aa).

Residue Ser-110–Pro-113 coordinates (6S)-5,6,7,8-tetrahydrofolate.

This sequence belongs to the Fmt family.

It carries out the reaction L-methionyl-tRNA(fMet) + (6R)-10-formyltetrahydrofolate = N-formyl-L-methionyl-tRNA(fMet) + (6S)-5,6,7,8-tetrahydrofolate + H(+). Functionally, attaches a formyl group to the free amino group of methionyl-tRNA(fMet). The formyl group appears to play a dual role in the initiator identity of N-formylmethionyl-tRNA by promoting its recognition by IF2 and preventing the misappropriation of this tRNA by the elongation apparatus. The sequence is that of Methionyl-tRNA formyltransferase from Prochlorococcus marinus (strain SARG / CCMP1375 / SS120).